The primary structure comprises 605 residues: Adenine deaminase (605 aa).

It belongs to the metallo-dependent hydrolases superfamily. Adenine deaminase family. The cofactor is Mn(2+).

It catalyses the reaction adenine + H2O + H(+) = hypoxanthine + NH4(+). The sequence is that of Adenine deaminase from Mesorhizobium japonicum (strain LMG 29417 / CECT 9101 / MAFF 303099) (Mesorhizobium loti (strain MAFF 303099)).